Consider the following 372-residue polypeptide: Y-box-binding protein 3 (372 aa).

Residues 1–82 (MSEAGEATTT…LATAAGSEDA (82 aa)) form a disordered region. S2 carries the N-acetylserine modification. At S2 the chain carries Phosphoserine. Low complexity predominate over residues 7–28 (ATTTTTTTLPQAPTEAAAAAPQ). S34 is subject to Phosphoserine. Low complexity predominate over residues 35 to 79 (PVGSGAPQAAAPAPAAHVAGNPGGDAAPAATGTAAAASLATAAGS). The region spanning 93–157 (GTVKWFNVRN…GEKGAEAANV (65 aa)) is the CSD domain. Residues S134, S201, S203, and S204 each carry the phosphoserine modification. The tract at residues 181 to 372 (YYGRRRGPPR…APPTQQSSAE (192 aa)) is disordered. Over residues 222–238 (QLRRPQYRPQYRQRRFP) the composition is skewed to basic residues. Residue R251 is modified to Omega-N-methylarginine. Polar residues predominate over residues 314–324 (QQATSGPNQPS). At S324 the chain carries Phosphoserine. Position 326 is an omega-N-methylarginine (R326). Basic residues predominate over residues 327 to 340 (RGYRRPYNYRRRPR). S346, S369, and S370 each carry phosphoserine.

Found in a mRNP complex with YBX2. Interacts with RRP1B. In terms of tissue distribution, highly expressed in skeletal muscle and heart.

Its subcellular location is the cytoplasm. It localises to the nucleus. Functionally, binds to the GM-CSF promoter. Seems to act as a repressor. Also binds to full-length mRNA and to short RNA sequences containing the consensus site 5'-UCCAUCA-3'. May have a role in translation repression. The sequence is that of Y-box-binding protein 3 (YBX3) from Homo sapiens (Human).